A 350-amino-acid polypeptide reads, in one-letter code: Tetraacyldisaccharide 4'-kinase (350 aa).

An ATP-binding site is contributed by 49–56 (TTGGTGKT).

Belongs to the LpxK family.

The enzyme catalyses a lipid A disaccharide + ATP = a lipid IVA + ADP + H(+). The protein operates within glycolipid biosynthesis; lipid IV(A) biosynthesis; lipid IV(A) from (3R)-3-hydroxytetradecanoyl-[acyl-carrier-protein] and UDP-N-acetyl-alpha-D-glucosamine: step 6/6. Transfers the gamma-phosphate of ATP to the 4'-position of a tetraacyldisaccharide 1-phosphate intermediate (termed DS-1-P) to form tetraacyldisaccharide 1,4'-bis-phosphate (lipid IVA). In Chlorobaculum tepidum (strain ATCC 49652 / DSM 12025 / NBRC 103806 / TLS) (Chlorobium tepidum), this protein is Tetraacyldisaccharide 4'-kinase.